The following is a 175-amino-acid chain: NADH-ubiquinone oxidoreductase chain 6 (175 aa).

The next 5 membrane-spanning stretches (helical) occupy residues 1–21, 25–45, 47–67, 88–108, and 149–169; these read MMLY…VGFS, SPIY…GIVL, FGGS…MMVV, AVLG…YYVL, and YGTW…VVIM.

It belongs to the complex I subunit 6 family. Core subunit of respiratory chain NADH dehydrogenase (Complex I) which is composed of 45 different subunits.

It localises to the mitochondrion inner membrane. The enzyme catalyses a ubiquinone + NADH + 5 H(+)(in) = a ubiquinol + NAD(+) + 4 H(+)(out). Its function is as follows. Core subunit of the mitochondrial membrane respiratory chain NADH dehydrogenase (Complex I) which catalyzes electron transfer from NADH through the respiratory chain, using ubiquinone as an electron acceptor. Essential for the catalytic activity and assembly of complex I. This chain is NADH-ubiquinone oxidoreductase chain 6 (MT-ND6), found in Bos indicus (Zebu).